The primary structure comprises 233 residues: Large ribosomal subunit protein uL1 (233 aa).

Belongs to the universal ribosomal protein uL1 family. As to quaternary structure, part of the 50S ribosomal subunit.

Functionally, binds directly to 23S rRNA. The L1 stalk is quite mobile in the ribosome, and is involved in E site tRNA release. Its function is as follows. Protein L1 is also a translational repressor protein, it controls the translation of the L11 operon by binding to its mRNA. This Campylobacter jejuni subsp. doylei (strain ATCC BAA-1458 / RM4099 / 269.97) protein is Large ribosomal subunit protein uL1.